Consider the following 119-residue polypeptide: Methylglyoxal synthase (119 aa).

Residues 1-119 form the MGS-like domain; it reads MRIALIAHDK…GTADLIIKQF (119 aa). Substrate-binding positions include H8, K12, 34–37, and 54–55; these read TGTT and SG. D60 acts as the Proton donor/acceptor in catalysis. Residue H87 coordinates substrate.

It belongs to the methylglyoxal synthase family.

The enzyme catalyses dihydroxyacetone phosphate = methylglyoxal + phosphate. In terms of biological role, catalyzes the formation of methylglyoxal from dihydroxyacetone phosphate. The protein is Methylglyoxal synthase of Clostridium botulinum (strain Eklund 17B / Type B).